The primary structure comprises 431 residues: Tol-Pal system protein TolB (431 aa).

Positions 1-26 are cleaved as a signal peptide; the sequence is MSLMTKLGFRALVASCLITAGSAANA. The segment at 406–431 is disordered; that stretch reads DGSAPPQILSVQGGSVREPSWGPFMQ.

It belongs to the TolB family. In terms of assembly, the Tol-Pal system is composed of five core proteins: the inner membrane proteins TolA, TolQ and TolR, the periplasmic protein TolB and the outer membrane protein Pal. They form a network linking the inner and outer membranes and the peptidoglycan layer.

The protein localises to the periplasm. Functionally, part of the Tol-Pal system, which plays a role in outer membrane invagination during cell division and is important for maintaining outer membrane integrity. This Burkholderia cenocepacia (strain HI2424) protein is Tol-Pal system protein TolB.